A 657-amino-acid polypeptide reads, in one-letter code: Methyl-accepting chemotaxis protein CtpL (657 aa).

At 1 to 5 the chain is on the cytoplasmic side; that stretch reads MRLKQ. The chain crosses the membrane as a helical span at residues 6 to 26; the sequence is LTNLNTLLLLTVCLALGITLW. Over 27–305 the chain is Periplasmic; sequence WSQRAMERPF…ERQRLQGQVR (279 aa). The helical transmembrane segment at 306–326 threads the bilayer; the sequence is LIQGGMIALILLIALAIDSLQ. Residues 327-380 form the HAMP domain; sequence RRLARVLGQLVPALSAWADGDFSRPISLRTRTEDLRNLEDSLNRLRSFLAELVG. Residues 327-657 are Cytoplasmic-facing; that stretch reads RRLARVLGQL…LRTTVQAFRL (331 aa). The 237-residue stretch at 385–621 folds into the Methyl-accepting transducer domain; that stretch reads RAEQVAGSSQ…EIRSHSERIH (237 aa).

This sequence belongs to the methyl-accepting chemotaxis (MCP) protein family.

It is found in the cell inner membrane. Chemotactic-signal transducers respond to changes in the concentration of attractants and repellents in the environment, transduce a signal from the outside to the inside of the cell, and facilitate sensory adaptation through the variation of the level of methylation. Chemoreceptor for inorganic phosphate, which is required for taxis at low concentrations of phosphate. Is also responsible for the positive chemotaxis toward 4-chloroaniline (4CA) and catechol. Does not recognize inorganic phosphate directly, but via a complex between the periplasmic protein PstS and inorganic phosphate. The chain is Methyl-accepting chemotaxis protein CtpL from Pseudomonas aeruginosa (strain ATCC 15692 / DSM 22644 / CIP 104116 / JCM 14847 / LMG 12228 / 1C / PRS 101 / PAO1).